Consider the following 397-residue polypeptide: Elongation factor Tu (397 aa).

The tr-type G domain occupies 10–207 (LPHVNVGTIG…TLDSYIPDPV (198 aa)). Positions 19 to 26 (GHVDHGKT) are G1. 19 to 26 (GHVDHGKT) provides a ligand contact to GTP. Threonine 26 contributes to the Mg(2+) binding site. The segment at 60-64 (GITIN) is G2. Residues 81–84 (DCPG) form a G3 region. GTP contacts are provided by residues 81–85 (DCPGH) and 136–139 (NKAD). The segment at 136–139 (NKAD) is G4. Residues 174-176 (SAR) are G5.

The protein belongs to the TRAFAC class translation factor GTPase superfamily. Classic translation factor GTPase family. EF-Tu/EF-1A subfamily. Monomer.

It localises to the cytoplasm. It catalyses the reaction GTP + H2O = GDP + phosphate + H(+). Functionally, GTP hydrolase that promotes the GTP-dependent binding of aminoacyl-tRNA to the A-site of ribosomes during protein biosynthesis. This is Elongation factor Tu from Pseudomonas fluorescens (strain SBW25).